A 502-amino-acid chain; its full sequence is Bone morphogenetic protein receptor type-1B (502 aa).

A signal peptide spans 1 to 13; the sequence is MLLRSAGKLNVGT. The disordered stretch occupies residues 1 to 25; sequence MLLRSAGKLNVGTKKEDGESTAPTP. Residues 14 to 126 are Extracellular-facing; the sequence is KKEDGESTAP…DFVDGPIHHR (113 aa). Disulfide bonds link Cys32–Cys53, Cys34–Cys38, Cys47–Cys71, Cys81–Cys95, and Cys96–Cys102. The chain crosses the membrane as a helical span at residues 127–148; that stretch reads ALLISVTVCSLLLVLIILFCYF. The Cytoplasmic segment spans residues 149 to 502; sequence RYKRQETRPR…KMSESQDIKL (354 aa). In terms of domain architecture, GS spans 174 to 203; that stretch reads ESLRDLIEQSQSSGSGSGLPLLVQRTIAKQ. One can recognise a Protein kinase domain in the interval 204–494; the sequence is IQMVKQIGKG…LRVKKTLAKM (291 aa). Residues 210–218 and Lys231 contribute to the ATP site; that span reads IGKGRYGEV. Residue Asp332 is the Proton acceptor of the active site.

This sequence belongs to the protein kinase superfamily. TKL Ser/Thr protein kinase family. TGFB receptor subfamily. In terms of assembly, interacts with high affinity with GDF5; positively regulates chondrocyte differentiation. Interacts with SCUBE3. Interacts with TSC22D1/TSC-22. Interacts with TGFBR3. The cofactor is Mg(2+). Requires Mn(2+) as cofactor. In terms of processing, autophosphorylated.

It localises to the cell membrane. The catalysed reaction is L-threonyl-[receptor-protein] + ATP = O-phospho-L-threonyl-[receptor-protein] + ADP + H(+). The enzyme catalyses L-seryl-[receptor-protein] + ATP = O-phospho-L-seryl-[receptor-protein] + ADP + H(+). Functionally, on ligand binding, forms a receptor complex consisting of two type II and two type I transmembrane serine/threonine kinases. Type II receptors phosphorylate and activate type I receptors which autophosphorylate, then bind and activate SMAD transcriptional regulators. Receptor for BMP7/OP-1 and GDF5. Positively regulates chondrocyte differentiation through GDF5 interaction. This chain is Bone morphogenetic protein receptor type-1B (BMPR1B), found in Homo sapiens (Human).